A 132-amino-acid polypeptide reads, in one-letter code: Small ribosomal subunit protein uS8 (132 aa).

The protein belongs to the universal ribosomal protein uS8 family. Part of the 30S ribosomal subunit. Contacts proteins S5 and S12.

One of the primary rRNA binding proteins, it binds directly to 16S rRNA central domain where it helps coordinate assembly of the platform of the 30S subunit. The chain is Small ribosomal subunit protein uS8 from Ureaplasma urealyticum serovar 10 (strain ATCC 33699 / Western).